The following is a 129-amino-acid chain: Large ribosomal subunit protein bL20 (129 aa).

It belongs to the bacterial ribosomal protein bL20 family.

In terms of biological role, binds directly to 23S ribosomal RNA and is necessary for the in vitro assembly process of the 50S ribosomal subunit. It is not involved in the protein synthesizing functions of that subunit. The chain is Large ribosomal subunit protein bL20 from Mycolicibacterium gilvum (strain PYR-GCK) (Mycobacterium gilvum (strain PYR-GCK)).